Consider the following 338-residue polypeptide: tRNA N6-adenosine threonylcarbamoyltransferase (338 aa).

Residues H111 and H115 each contribute to the Fe cation site. Substrate is bound by residues V134 to G138, D167, G180, D184, and N272. D300 is a binding site for Fe cation.

The protein belongs to the KAE1 / TsaD family. Fe(2+) is required as a cofactor.

The protein localises to the cytoplasm. The catalysed reaction is L-threonylcarbamoyladenylate + adenosine(37) in tRNA = N(6)-L-threonylcarbamoyladenosine(37) in tRNA + AMP + H(+). In terms of biological role, required for the formation of a threonylcarbamoyl group on adenosine at position 37 (t(6)A37) in tRNAs that read codons beginning with adenine. Is involved in the transfer of the threonylcarbamoyl moiety of threonylcarbamoyl-AMP (TC-AMP) to the N6 group of A37, together with TsaE and TsaB. TsaD likely plays a direct catalytic role in this reaction. The protein is tRNA N6-adenosine threonylcarbamoyltransferase of Syntrophus aciditrophicus (strain SB).